Consider the following 168-residue polypeptide: Crossover junction endodeoxyribonuclease RuvC (168 aa).

Catalysis depends on residues Asp-11, Glu-71, and Asp-144. Residues Asp-11, Glu-71, and Asp-144 each contribute to the Mg(2+) site.

This sequence belongs to the RuvC family. Homodimer which binds Holliday junction (HJ) DNA. The HJ becomes 2-fold symmetrical on binding to RuvC with unstacked arms; it has a different conformation from HJ DNA in complex with RuvA. In the full resolvosome a probable DNA-RuvA(4)-RuvB(12)-RuvC(2) complex forms which resolves the HJ. Mg(2+) is required as a cofactor.

Its subcellular location is the cytoplasm. It carries out the reaction Endonucleolytic cleavage at a junction such as a reciprocal single-stranded crossover between two homologous DNA duplexes (Holliday junction).. Functionally, the RuvA-RuvB-RuvC complex processes Holliday junction (HJ) DNA during genetic recombination and DNA repair. Endonuclease that resolves HJ intermediates. Cleaves cruciform DNA by making single-stranded nicks across the HJ at symmetrical positions within the homologous arms, yielding a 5'-phosphate and a 3'-hydroxyl group; requires a central core of homology in the junction. The consensus cleavage sequence is 5'-(A/T)TT(C/G)-3'. Cleavage occurs on the 3'-side of the TT dinucleotide at the point of strand exchange. HJ branch migration catalyzed by RuvA-RuvB allows RuvC to scan DNA until it finds its consensus sequence, where it cleaves and resolves the cruciform DNA. This Protochlamydia amoebophila (strain UWE25) protein is Crossover junction endodeoxyribonuclease RuvC.